Consider the following 545-residue polypeptide: Chaperonin GroEL 1 (545 aa).

ATP-binding positions include 30-33, Lys-51, 87-91, Gly-415, and Asp-495; these read TLGP and DGTTT.

The protein belongs to the chaperonin (HSP60) family. In terms of assembly, forms a cylinder of 14 subunits composed of two heptameric rings stacked back-to-back. Interacts with the co-chaperonin GroES.

The protein resides in the cytoplasm. It carries out the reaction ATP + H2O + a folded polypeptide = ADP + phosphate + an unfolded polypeptide.. In terms of biological role, together with its co-chaperonin GroES, plays an essential role in assisting protein folding. The GroEL-GroES system forms a nano-cage that allows encapsulation of the non-native substrate proteins and provides a physical environment optimized to promote and accelerate protein folding. The chain is Chaperonin GroEL 1 from Rhizobium etli (strain ATCC 51251 / DSM 11541 / JCM 21823 / NBRC 15573 / CFN 42).